The sequence spans 210 residues: Amelogenin, X isoform (210 aa).

The first 16 residues, 1–16, serve as a signal peptide directing secretion; it reads MGTWILFACLLGAAFA. Ser32 is subject to Phosphoserine. 2 stretches are compositionally biased toward low complexity: residues 109–119 and 136–169; these read VAPQQPMMPVP and PSAQQPFQQPFQPQAIPPQSHQPMQPQSPLHPMQ. Positions 109–187 are disordered; sequence VAPQQPMMPV…PPLFSMQPLS (79 aa). Over residues 170 to 179 the composition is skewed to pro residues; the sequence is PLAPQPPLPP.

This sequence belongs to the amelogenin family. Interacts with KRT5. Several forms are produced by C-terminal processing. Post-translationally, phosphorylated by FAM20C in vitro.

It is found in the secreted. It localises to the extracellular space. The protein resides in the extracellular matrix. Its function is as follows. Plays a role in the biomineralization of teeth. Seems to regulate the formation of crystallites during the secretory stage of tooth enamel development. Thought to play a major role in the structural organization and mineralization of developing enamel. This Mus musculus (Mouse) protein is Amelogenin, X isoform (Amelx).